A 127-amino-acid chain; its full sequence is Small ribosomal subunit protein uS13 (127 aa).

A disordered region spans residues 96–127 (LPCHGQRTSTNARTRKGPKRTAVKKKGAAKKK). The span at 108–127 (RTRKGPKRTAVKKKGAAKKK) shows a compositional bias: basic residues.

Belongs to the universal ribosomal protein uS13 family. As to quaternary structure, part of the 30S ribosomal subunit. Forms a loose heterodimer with protein S19. Forms two bridges to the 50S subunit in the 70S ribosome.

Functionally, located at the top of the head of the 30S subunit, it contacts several helices of the 16S rRNA. In the 70S ribosome it contacts the 23S rRNA (bridge B1a) and protein L5 of the 50S subunit (bridge B1b), connecting the 2 subunits; these bridges are implicated in subunit movement. Contacts the tRNAs in the A and P-sites. The protein is Small ribosomal subunit protein uS13 of Desulfosudis oleivorans (strain DSM 6200 / JCM 39069 / Hxd3) (Desulfococcus oleovorans).